The following is a 553-amino-acid chain: MALALASANSFLLPTKTHFALHVSPPPSKKTLLCTNPSSNFSFNKALSSRRRKQAWCVAAAADVKDATLLDGEEDQKVLVGPSSEQERKGEREVADYDWTEEWYPLYLTKNVPHDAPLGLKVYDKNIVLFRDGNDQFQCYEDRCPHRLAKLSEGQLIDGRLECLYHGWQFEGEGKCVKIPQLPADAKIPKSACVKTYEVRDSQGVLWVWMSRKTPPNVSKIPWFENFARPGFQDISTTHELPYDHSILLENLMDPAHVPISHDRTDWSAKREDAQALGFEVTERTDRGFAGWWGREKDGSKPNFLRFEAPCVLQNNREIVDKNGEINHFSGLFLCRPTGQGKSMLIVRFGATKRSPLIKLFPEWYFHQNASKVFEQDMGFLSSQNEILLKEKVPTKELYLNLKSSDTWVAEYRKWMDKVGHGMPYHFGHSTISLPEEPAVVEHAPAGLVAGLSASSPAKGGIGTMHAPNLANRYFRHVIHCKGCSSAIKAFQIWKNVLSGVVVALAALAILVSGRQWKVLLLASASLCSVGVYACSTAIAMNTTNFIRVHRRL.

The transit peptide at 1 to 60 (MALALASANSFLLPTKTHFALHVSPPPSKKTLLCTNPSSNFSFNKALSSRRRKQAWCVAA) directs the protein to the chloroplast. The Stromal segment spans residues 61-492 (AADVKDATLL…GCSSAIKAFQ (432 aa)). Positions 103–208 (WYPLYLTKNV…VRDSQGVLWV (106 aa)) constitute a Rieske domain. Positions 144, 146, 163, and 166 each coordinate [2Fe-2S] cluster. 2 residues coordinate Fe cation: His257 and His262. The helical transmembrane segment at 493 to 513 (IWKNVLSGVVVALAALAILVS) threads the bilayer. The Chloroplast intermembrane segment spans residues 514–518 (GRQWK). Residues 519–539 (VLLLASASLCSVGVYACSTAI) form a helical membrane-spanning segment. Residues 540-553 (AMNTTNFIRVHRRL) lie on the Stromal side of the membrane.

As to quaternary structure, part of the Tic complex. Interacts with TIC62 and TIC110. It depends on [2Fe-2S] cluster as a cofactor.

It localises to the plastid. It is found in the chloroplast inner membrane. Involved in protein precursor import into chloroplasts. Part of the redox regulon consisting of TIC32, TIC 55 and TIC62. The chain is Protein TIC 55, chloroplastic (TIC55) from Pisum sativum (Garden pea).